Consider the following 453-residue polypeptide: UPF0210 protein Mbar_A3181 (453 aa).

The protein belongs to the UPF0210 family.

This chain is UPF0210 protein Mbar_A3181, found in Methanosarcina barkeri (strain Fusaro / DSM 804).